We begin with the raw amino-acid sequence, 138 residues long: Nucleoside diphosphate kinase (138 aa).

6 residues coordinate ATP: Lys-9, Phe-57, Arg-85, Thr-91, Arg-102, and Asn-112. The active-site Pros-phosphohistidine intermediate is the His-115.

The protein belongs to the NDK family. As to quaternary structure, homotetramer. Mg(2+) serves as cofactor.

The protein localises to the cytoplasm. It catalyses the reaction a 2'-deoxyribonucleoside 5'-diphosphate + ATP = a 2'-deoxyribonucleoside 5'-triphosphate + ADP. The catalysed reaction is a ribonucleoside 5'-diphosphate + ATP = a ribonucleoside 5'-triphosphate + ADP. Functionally, major role in the synthesis of nucleoside triphosphates other than ATP. The ATP gamma phosphate is transferred to the NDP beta phosphate via a ping-pong mechanism, using a phosphorylated active-site intermediate. The sequence is that of Nucleoside diphosphate kinase from Exiguobacterium sibiricum (strain DSM 17290 / CCUG 55495 / CIP 109462 / JCM 13490 / 255-15).